Reading from the N-terminus, the 280-residue chain is Bifunctional protein FolD (280 aa).

NADP(+) contacts are provided by residues 164–166, Ser189, and Val230; that span reads GRS.

The protein belongs to the tetrahydrofolate dehydrogenase/cyclohydrolase family. As to quaternary structure, homodimer.

The catalysed reaction is (6R)-5,10-methylene-5,6,7,8-tetrahydrofolate + NADP(+) = (6R)-5,10-methenyltetrahydrofolate + NADPH. It catalyses the reaction (6R)-5,10-methenyltetrahydrofolate + H2O = (6R)-10-formyltetrahydrofolate + H(+). It participates in one-carbon metabolism; tetrahydrofolate interconversion. Its function is as follows. Catalyzes the oxidation of 5,10-methylenetetrahydrofolate to 5,10-methenyltetrahydrofolate and then the hydrolysis of 5,10-methenyltetrahydrofolate to 10-formyltetrahydrofolate. This chain is Bifunctional protein FolD, found in Geotalea uraniireducens (strain Rf4) (Geobacter uraniireducens).